The primary structure comprises 231 residues: Large ribosomal subunit protein uL1 (231 aa).

It belongs to the universal ribosomal protein uL1 family. As to quaternary structure, part of the 50S ribosomal subunit.

Its function is as follows. Binds directly to 23S rRNA. The L1 stalk is quite mobile in the ribosome, and is involved in E site tRNA release. In terms of biological role, protein L1 is also a translational repressor protein, it controls the translation of the L11 operon by binding to its mRNA. This is Large ribosomal subunit protein uL1 from Paracidovorax citrulli (strain AAC00-1) (Acidovorax citrulli).